Here is a 225-residue protein sequence, read N- to C-terminus: Membrane protein (225 aa).

Topologically, residues 1 to 20 (MPNETNCTLDFEQSVQLFKE) are virion surface. The chain crosses the membrane as a helical span at residues 21–41 (YNLFITAFLLFLTIILQYGYA). The Intravirion portion of the chain corresponds to 42–51 (TRSKVIYTLK). Residues 52–72 (MIVLWCFWPLNIAVGVISCTY) traverse the membrane as a helical segment. Residues 73 to 77 (PPNTG) lie on the Virion surface side of the membrane. Residues 78–98 (GLVAAIILTVFACLSFVGYWI) traverse the membrane as a helical segment. Topologically, residues 99–225 (QSIRLFKRCR…VATGGSSLYT (127 aa)) are intravirion.

Belongs to the gammacoronaviruses M protein family. In terms of assembly, homomultimer. Interacts with envelope E protein in the budding compartment of the host cell, which is located between endoplasmic reticulum and the Golgi complex. Forms a complex with HE and S proteins. Interacts with nucleocapsid N protein. This interaction probably participates in RNA packaging into the virus.

The protein localises to the virion membrane. It localises to the host Golgi apparatus membrane. Component of the viral envelope that plays a central role in virus morphogenesis and assembly via its interactions with other viral proteins. This chain is Membrane protein, found in Avian infectious bronchitis virus (strain Beaudette) (IBV).